Reading from the N-terminus, the 507-residue chain is Probable Xaa-Pro aminopeptidase TRV_02643 (507 aa).

Residues aspartate 275, aspartate 286, glutamate 434, and glutamate 478 each contribute to the Mn(2+) site.

It belongs to the peptidase M24B family. The cofactor is Mn(2+).

The enzyme catalyses Release of any N-terminal amino acid, including proline, that is linked to proline, even from a dipeptide or tripeptide.. Catalyzes the removal of a penultimate prolyl residue from the N-termini of peptides. The protein is Probable Xaa-Pro aminopeptidase TRV_02643 of Trichophyton verrucosum (strain HKI 0517).